The chain runs to 2449 residues: MAKQGCIRVSVPFPLVYAPTTSDSTNLRASHQGRTTRLPLGSSLSEEYCLISWALLASLYHGSATVLLNGVLPSELGSPCEPCADAIVDMAPDSEIQSLERQMADFLQQIKHIPAESDAANDNPNVVLDFGERTASLLMQSVPSSHSATEESFPPIHDGEGLHLRIICQPSEPDISWFCEVVHDENLVDRDAAQRIAEQFAHIYKQLGSHSRGLQASINDLSLLNTADEHQLIEWNHDPPAIIDACFQDLFAIQVHSGPGRLAVSAWDGELTYGQLDELANQSAQRLLEQNVRPGMVVPLLFEKSKWMAVAMLAVAKVRATAVCICISHPMDLMKRILYQSNPAIILLSRAQEPLIRQIGEYPVLIIPEDLYSSPRSATAEQPVSTAFPSASSDDVAFIVFSSGSTGVPKGIVLSHRAIATAGHYVGDRLQVTSEARVLQFSSYAFDMSIIETWQALTRGACLCIPSETQRLNSMPEFIQQHRVTWAFFTPTTLRNFEPSDFPTLETLTLGGETIPVDLARHWESRVSIFNLWGPAEVGPAGAGPISPTSGWIPGTFGTAAGCISWITMPDDSDSLAPIGTVGEMIIEGAVVADGYLNDPTRTQQVFIEAPRWRERFTEIPVQCRFFRTGDLCHYNPDGTLRYVGRRDTVVKIRGQRVDVDAVELQLRQLDPHVDSVVSAVKFYDAAGAMTLVQFLVDRTGFEIDWSSQRPGESMTALESGSWALSHHYQSLLRPYLPQYMVPSLIIPVKSLPRTATDKVDRRRLCQCFQQFSSSQLMDWLGGNRSRCLAKADSLPMTPNEDVLVKVIASVCKISTSSIDLKASFPQLGGDSTTAIRLTRVLLAYNLLLHTERLLDIECSLRTVAKEARPTDAVTLADGPPPFSLIGVNDANAITCLRRVASQECKIQEEDIQDIYPTTPLQEGLLAVTEIHSGDAYVDRVLFSLPADCSVELAQQAWQNVVQATSILRTRIIQADDGRTYQIVVRPERKIQWQTASSESQFYEKDRARSMGLGSPLVRLTLIQDSEAREQPAKLAVTFHHSVYDAFTLHACIKQAEKAYTSETLFPSTFTGFINHLNQQKLADGERTRQFWLKEMVELQSNVFPALPSPQYLPHTSTSVVYEGCRANATSSKQISSPSAKVRLAWALLISLYTDSPDIVYGTVVDGRRGLGVILGSVLGPTIATLPVRTTIQRESTVEESLAQVQENMKRMIPFEHTGLQRIRNMGHGPATACKFQNLLVIQADDMIPDSPIFGPVEVSVGSINSFPGYALILQVAPSETSWKFEMLVDEAVVPREQAELMLSQLSHLLKQIDDCHTQNLTIAQLDLISDRDSELLSTCLKSIPTCLDSTIVDLVEAQVTRNPSKCAVSACDGDLSYAELQSSARQLAQLLLPLIVGQGIQFIPIFLERSYWVPISMLAVAKLGVAFVLLDPNQPHERNVKICRAISGTLGITSAQMQNLASTVCDGPWISLSTEALISHAQAVPSGTTTTMPPMPNPSPRDLLYAAFTSGSTGEPKAVLIEHASYASAVIAQQNKLEITSSSRVLQLSSYAFDSFAVEILTVLASGGCVCIPSESEIAEDLGHVVEKYRSNWLCITPSVLRLLTPDDVPSLRTVVAVGESMLPGQIKLWCSRVHLYCGYGPTECCTGAAVHRVTSTDADARLIGKGMGAVLWVVDKEDVTRRMPVNTVGELILQGPIVGRGYLNNPKKSTECFLQPPSWAPQFKDRQASRMYRTGDMVRRNLDGTFTFLGRTNQHTKLHGQRIDLAEIERHVLRFFGTDASGIAAILQPTKSDMPPCLVAMVHIPSLAAKVPDISDMNGFSNIAFQSHSHDFALRASRVQQKLRQSFPPVMVPELYLQLPSIPLTISGKVNRRSLLDEATELSPVDLHDLGGLSRNESRSTGLLDHTDEPVAWALSKHIGQLLQRKTGHEKMAAEIVGRNVGLSRVGLDSIDIIALSQFISRHYDCSISMTNLFDSTLTVRMVAEMIDRTPNSVPEKALLSPGWWERVQCMIRQINDLPVCQSSRRTIHSRPSGKRLFLTGATGFLGTHILHQLLVDNDVSIVYVLARAPCPRKGLARIIQAARLARWWRNDYRRLIQVWPGDLSQPHLGLADEHWETLSGTESSLNSSIGAVDAIIHCGAVIHWGYDYDTLEAANVRSTFDILQCLNRSPTPIALTYISALIPGDAALATTDTDNHPSMSNGHAVFPPIELTDGYTQTKFASEQLIGAFSARHKAHSLTIVRPGFMIGPVSNAVANGDDLLWRVVTTAMTTCSYNSDESDNWLFVAAVDWVASLIIHETLHARPSSHSVNDNANPLAPSAKAVSIGDGLNMSDFWKAIMLGLGRDLIPSSSQRWMDTVEQQVNEVGTSHPLWPLMGFLRASGGCLGVAPTDPLPVPIYQPPSLTNMIRQAVVRNAEYLASLEDLAASTMLFKRRNKVALGNGLINS.

The tract at residues 253–654 (IQVHSGPGRL…GRRDTVVKIR (402 aa)) is adenylation 1. Positions 795-870 (LPMTPNEDVL…LRTVAKEARP (76 aa)) constitute a Carrier 1 domain. Ser815 is subject to O-(pantetheine 4'-phosphoryl)serine. The interval 913 to 1337 (QDIYPTTPLQ…LISDRDSELL (425 aa)) is condensation 1. Residues 1357-1756 (EAQVTRNPSK…TFTFLGRTNQ (400 aa)) form an adenylation 2 region. The Carrier 2 domain occupies 1915-1993 (WALSKHIGQL…MVAEMIDRTP (79 aa)). At Ser1952 the chain carries O-(pantetheine 4'-phosphoryl)serine. Positions 2041–2297 (LTGATGFLGT…VAAVDWVASL (257 aa)) are reductase (R) domain. NADPH contacts are provided by Thr2045, Met2249, and Asn2259.

It belongs to the NRP synthetase family.

It participates in alkaloid biosynthesis. Functionally, nonribisomal peptide synthetase; part of the gene cluster that mediates the biosynthesis of paraherquamide, a fungal indole alkaloid that belongs to a family of natural products containing a characteristic bicyclo[2.2.2]diazaoctane core. The first steps in the biosynthesis of paraherquamide is the production of the beta-methyl-proline precursor from L-isoleucine. They require oxidation of a terminally hydroxylated L-isoleucine to the corresponding aldehyde by enzymes which have still to be identified. Spontaneous cyclization and dehydration would yield the 4-methyl pyrolline-5-carboxylic acid, which is then reduced by the pyrroline-5-carboxylate reductase phqD leading to the beta-methyl-proline precursor. The next step of paraherquamide biosynthesis involves coupling of beta-methyl-proline and L-tryptophan by the bimodular NRPS phqB, to produce a monooxopiperazine intermediate. The reductase (R) domain of phqB utilizes NADPH for hydride transfer to reduce the thioester bond of the T domain-tethered linear dipeptide to a hemithioaminal intermediate, which spontaneously cleaves the C-S bond to release the aldehyde product. This compound undergoes spontaneous cyclization and dehydration to give a dienamine which is reverse prenylated at C-2 by the reverse prenyltransferase phqJ. The other prenyltransferase present in the cluster, phqI may be a redundant gene in the pathway. During biosynthetic assembly, the key step to produce the polycyclic core is catalyzed by the bifunctional reductase and intramolecular [4+2] Diels-Alderase, phqE, resulting in formation of the [2.2.2] diazaoctane intermediate preparaherquamide. Following formation of preparaherquamide, an indole 2,3-epoxidation-initiated pinacol-like rearrangement is catalyzed by the phqK FAD-dependent monooxygenase. The prenyltransferase phqA, the cytochrome P450 monooxygenase phqL, and the FAD-linked oxidoreductase phqH (or the cytochrome P450 monooxygenase phqM), are proposed to be involved in the formation of the pyran ring. The FAD-dependent monooxygenase phqK is likely responsible for generation of the spiro-oxindole, and the N-methylation is likely mediated by the phqN methyltransferase leading to the isolable natural product paraherquamide F. However, the order of these biosynthetic steps has still to be determined. In late-stage paraherquamide biosynthesis, the third P450 monooxygenase, phqO, is probably responsible for the C-14 hydroxylation, transforming paraherquamide F to paraherquamide G, and paraherquamide E to the final product paraherquamide A. The expansion from the 6-membered ring pyran (in paraherquamides F and G) to the 7-membered dioxepin ring (in paraherquamides A and E) represents a poorly understood but intriguing process that probably involves the 2-oxoglutarate-dependent dioxygenase phqC. Finally, the remaining members of the paraherquamide cluster, including phqI as well as phqM (or phqH), do not have a clearly prescribed role and appear to be redundant. The sequence is that of Nonribisomal peptide synthetase phqB from Penicillium fellutanum.